Reading from the N-terminus, the 273-residue chain is 4-hydroxy-tetrahydrodipicolinate reductase (273 aa).

Residues Gly12–Met17 and Glu38 each bind NAD(+). An NADP(+)-binding site is contributed by Arg39. Residues Gly102 to Thr104 and Ala126 to Phe129 contribute to the NAD(+) site. The active-site Proton donor/acceptor is the His159. His160 contributes to the (S)-2,3,4,5-tetrahydrodipicolinate binding site. Lys163 functions as the Proton donor in the catalytic mechanism. Residue Gly169–Thr170 coordinates (S)-2,3,4,5-tetrahydrodipicolinate.

It belongs to the DapB family. As to quaternary structure, homotetramer.

The protein localises to the cytoplasm. The enzyme catalyses (S)-2,3,4,5-tetrahydrodipicolinate + NAD(+) + H2O = (2S,4S)-4-hydroxy-2,3,4,5-tetrahydrodipicolinate + NADH + H(+). It catalyses the reaction (S)-2,3,4,5-tetrahydrodipicolinate + NADP(+) + H2O = (2S,4S)-4-hydroxy-2,3,4,5-tetrahydrodipicolinate + NADPH + H(+). The protein operates within amino-acid biosynthesis; L-lysine biosynthesis via DAP pathway; (S)-tetrahydrodipicolinate from L-aspartate: step 4/4. In terms of biological role, catalyzes the conversion of 4-hydroxy-tetrahydrodipicolinate (HTPA) to tetrahydrodipicolinate. This chain is 4-hydroxy-tetrahydrodipicolinate reductase, found in Salmonella arizonae (strain ATCC BAA-731 / CDC346-86 / RSK2980).